The sequence spans 296 residues: MLLGSHVSMSGKKMLEGSAIEAHEYGETTFMIYTGAPQNTRRKSIEDLNITKGHEVMEKYGLSNIVVHAPYIINIANTTKPETFNLGVDFLQQEIERTQAIGAKDIVLHPGAHVGAGVDAGINKIIEGLNEVLTNDNNVRIALETMAGKGTEIGRSFEELARIIDGVHNNERLSVCFDTCHTHDAGYNVKEDFDGVLNEFDKIIGVDRIKVVHVNDSKNDRGAQKDRHENIGFGYIGFDALNYIVHHDSFKDIPKILETPYVGEDKKNKKPPYKLEIEMLKQQQFDPELKNKVMQQ.

Zn(2+) contacts are provided by histidine 68, histidine 109, glutamate 144, aspartate 178, histidine 181, histidine 213, aspartate 226, histidine 228, and glutamate 258.

It belongs to the AP endonuclease 2 family. Zn(2+) serves as cofactor.

The enzyme catalyses Endonucleolytic cleavage to 5'-phosphooligonucleotide end-products.. Its function is as follows. Endonuclease IV plays a role in DNA repair. It cleaves phosphodiester bonds at apurinic or apyrimidinic (AP) sites, generating a 3'-hydroxyl group and a 5'-terminal sugar phosphate. The protein is Probable endonuclease 4 of Staphylococcus aureus (strain NCTC 8325 / PS 47).